A 259-amino-acid chain; its full sequence is 5'-nucleotidase SurE (259 aa).

A divalent metal cation is bound by residues aspartate 8, aspartate 9, serine 40, and asparagine 92.

Belongs to the SurE nucleotidase family. A divalent metal cation is required as a cofactor.

The protein localises to the cytoplasm. The enzyme catalyses a ribonucleoside 5'-phosphate + H2O = a ribonucleoside + phosphate. Functionally, nucleotidase that shows phosphatase activity on nucleoside 5'-monophosphates. In Xanthomonas euvesicatoria pv. vesicatoria (strain 85-10) (Xanthomonas campestris pv. vesicatoria), this protein is 5'-nucleotidase SurE.